Consider the following 132-residue polypeptide: Small ribosomal subunit protein uS8 (132 aa).

It belongs to the universal ribosomal protein uS8 family. As to quaternary structure, part of the 30S ribosomal subunit. Contacts proteins S5 and S12.

In terms of biological role, one of the primary rRNA binding proteins, it binds directly to 16S rRNA central domain where it helps coordinate assembly of the platform of the 30S subunit. The sequence is that of Small ribosomal subunit protein uS8 from Corynebacterium glutamicum (strain R).